Reading from the N-terminus, the 609-residue chain is Cell division protein DipM (609 aa).

An N-terminal signal peptide occupies residues 1-24 (MRQLWTQAAVIALTAGTLGAPAHA). The tract at residues 21–103 (PAHASGQSGQ…PVLRATPPRT (83 aa)) is disordered. A compositionally biased stretch (polar residues) spans 25 to 38 (SGQSGQRFTPNFPI). A compositionally biased stretch (pro residues) spans 79–93 (LPPPAPVSTPAPAPQ). LysM domains follow at residues 121–165 (QVRV…KIKG) and 171–215 (KAYV…KLLL). Composition is skewed to low complexity over residues 242–258 (AEPA…AATP) and 265–280 (PVSE…STTT). Residues 242 to 280 (AEPAPATTRPATPAATPSRPVRQPVSEETSEPATTSTTT) form a disordered region. 2 LysM domains span residues 295 to 339 (QVHT…KIKG) and 345 to 389 (KAYS…KIAL). The interval 389-457 (LPDGFRDKGP…AAQPITPPPS (69 aa)) is disordered. The segment covering 400–429 (RTTTTTRPATPPANTYARVDSSAAAASTPS) has biased composition (low complexity). Positions 503 to 603 (NDGLNIRAPQ…VKDKAKPVDP (101 aa)) are lytM.

The protein resides in the periplasm. In terms of biological role, required for efficient cell division, cell polarity and normal cell morphology. Facilitates remodeling of the peptidoglycan layer and, thus, coordinated constriction of the cell envelope during the division process. Plays a critical role in maintaining proper cell envelope architecture during growth and division. Required for normal envelope invagination during cell division and to establish or maintain outer membrane connections throughout the cell envelope. May serve as a regulatory hub coordinating the activities of multiple peptidoglycan-degrading enzymes during cell constriction. Required to position SdpA and SdpB at midcell. This chain is Cell division protein DipM, found in Caulobacter vibrioides (strain NA1000 / CB15N) (Caulobacter crescentus).